The chain runs to 638 residues: DNA gyrase subunit B (638 aa).

The Toprim domain maps to 423–537; the sequence is CEVYIVEGDS…KGHVYLAMPP (115 aa). Mg(2+)-binding residues include glutamate 429, aspartate 502, and aspartate 504.

Belongs to the type II topoisomerase GyrB family. In terms of assembly, heterotetramer, composed of two GyrA and two GyrB chains. In the heterotetramer, GyrA contains the active site tyrosine that forms a transient covalent intermediate with DNA, while GyrB binds cofactors and catalyzes ATP hydrolysis. Requires Mg(2+) as cofactor. Mn(2+) is required as a cofactor. Ca(2+) serves as cofactor.

It is found in the cytoplasm. It carries out the reaction ATP-dependent breakage, passage and rejoining of double-stranded DNA.. Its function is as follows. A type II topoisomerase that negatively supercoils closed circular double-stranded (ds) DNA in an ATP-dependent manner to modulate DNA topology and maintain chromosomes in an underwound state. Negative supercoiling favors strand separation, and DNA replication, transcription, recombination and repair, all of which involve strand separation. Also able to catalyze the interconversion of other topological isomers of dsDNA rings, including catenanes and knotted rings. Type II topoisomerases break and join 2 DNA strands simultaneously in an ATP-dependent manner. This is DNA gyrase subunit B from Treponema denticola (strain ATCC 35405 / DSM 14222 / CIP 103919 / JCM 8153 / KCTC 15104).